Reading from the N-terminus, the 451-residue chain is Probable plasmid replicative DNA helicase (451 aa).

Residues 194 to 451 (QNSFFDAFPT…SKFSAIKKVW (258 aa)) form the SF4 helicase domain. Residue 225 to 232 (ARPSIGKT) participates in ATP binding.

The protein belongs to the helicase family. DnaB subfamily. In terms of assembly, homohexamer.

The enzyme catalyses Couples ATP hydrolysis with the unwinding of duplex DNA at the replication fork by translocating in the 5'-3' direction. This creates two antiparallel DNA single strands (ssDNA). The leading ssDNA polymer is the template for DNA polymerase III holoenzyme which synthesizes a continuous strand.. It carries out the reaction ATP + H2O = ADP + phosphate + H(+). Functionally, a replicative DNA helicase, it participates in initiation and elongation during DNA replication. Travels ahead of the DNA replisome, separating dsDNA into templates for DNA synthesis. A processive ATP-dependent 5'-3' DNA helicase it has DNA-dependent ATPase activity. In terms of biological role, the plasmid this protein is encoded on is thought to be required for growth within mammalian cells. In Chlamydia trachomatis serovar L2 (strain ATCC VR-902B / DSM 19102 / 434/Bu), this protein is Probable plasmid replicative DNA helicase.